We begin with the raw amino-acid sequence, 335 residues long: N-acetyl-gamma-glutamyl-phosphate reductase (335 aa).

Cys147 is an active-site residue.

It belongs to the NAGSA dehydrogenase family. Type 1 subfamily.

The protein resides in the cytoplasm. It carries out the reaction N-acetyl-L-glutamate 5-semialdehyde + phosphate + NADP(+) = N-acetyl-L-glutamyl 5-phosphate + NADPH + H(+). The protein operates within amino-acid biosynthesis; L-arginine biosynthesis; N(2)-acetyl-L-ornithine from L-glutamate: step 3/4. Its function is as follows. Catalyzes the NADPH-dependent reduction of N-acetyl-5-glutamyl phosphate to yield N-acetyl-L-glutamate 5-semialdehyde. The polypeptide is N-acetyl-gamma-glutamyl-phosphate reductase (Sulfurovum sp. (strain NBC37-1)).